A 1086-amino-acid chain; its full sequence is Tyrosine-protein kinase receptor svh-2 (1086 aa).

The first 34 residues, 1–34 (MVLGSSQSSAKELTTQSSIFRFLVLLLCFTSATG), serve as a signal peptide directing secretion. Residues 35–651 (GQINGKLLNG…DKKGSSPGWK (617 aa)) lie on the Extracellular side of the membrane. 5 N-linked (GlcNAc...) asparagine glycosylation sites follow: Asn-276, Asn-299, Asn-461, Asn-554, and Asn-617. A helical membrane pass occupies residues 652–672 (IAIAIISVMTIILIVAIIVYY). At 673–1086 (MRNRFPRIKT…LLSECSETSV (414 aa)) the chain is on the cytoplasmic side. The Protein kinase domain occupies 735–996 (VDKLDPIGQG…SDLVTIIPNV (262 aa)). ATP is bound by residues 741-749 (IGQGHYGVV) and Lys-767. Asp-858 acts as the Proton acceptor in catalysis. Phosphotyrosine is present on Tyr-890. The tract at residues 1056–1086 (AELPSDSPSTSTAIPQSTPYQLLSECSETSV) is disordered. The span at 1061–1086 (DSPSTSTAIPQSTPYQLLSECSETSV) shows a compositional bias: polar residues.

This sequence belongs to the protein kinase superfamily. Tyr protein kinase family. In terms of assembly, interacts (via cytoplasmic domain) with mlk-1. Interacts with shc-1 (via SH2 domain). May interact (when tyrosine-phosphorylated) with tns-1 (via SH2 domain). Post-translationally, may be autophosphorylated on Tyr-890 following dimerization. As to expression, expressed in body wall and vulva muscles, pharynx, intestine, excretory canals, distal tip cells and some neurons. Expressed in D-type motor neurons upon axon injury.

It is found in the cell membrane. It catalyses the reaction L-tyrosyl-[protein] + ATP = O-phospho-L-tyrosyl-[protein] + ADP + H(+). Receptor tyrosine kinase which may phosphorylate mlk-1, a component of the mlk-1, mek-1 and kgb-1 pathway. Involved in axon regeneration after injury by promoting the generation of productive and stable growth cones. In Caenorhabditis elegans, this protein is Tyrosine-protein kinase receptor svh-2.